We begin with the raw amino-acid sequence, 221 residues long: uncharacterized protein (221 aa).

Helical transmembrane passes span 33 to 55, 70 to 92, 99 to 121, 125 to 147, 154 to 176, and 186 to 208; these read YFLL…ISYI, FGYR…QKIV, LEML…FIII, YGAY…YTLL, YFND…SFWI, and IISM…ITLI.

Its subcellular location is the cell membrane. This is an uncharacterized protein from Aquifex aeolicus (strain VF5).